The primary structure comprises 678 residues: Ribonuclease Z 2, mitochondrial (678 aa).

The N-terminal 37 residues, 1–37 (MKASLLVPRRALLFGQLLPPKYSWYSVKRWQSQLTFR), are a transit peptide targeting the mitochondrion.

Belongs to the RNase Z family. Requires Zn(2+) as cofactor.

It is found in the mitochondrion. It localises to the cytoplasm. The catalysed reaction is Endonucleolytic cleavage of RNA, removing extra 3' nucleotides from tRNA precursor, generating 3' termini of tRNAs. A 3'-hydroxy group is left at the tRNA terminus and a 5'-phosphoryl group is left at the trailer molecule.. Zinc phosphodiesterase, which displays some tRNA 3'-processing endonuclease activity. May be involved in tRNA maturation, by removing a 3'-trailer from precursor tRNA. This chain is Ribonuclease Z 2, mitochondrial (trz2), found in Schizosaccharomyces pombe (strain 972 / ATCC 24843) (Fission yeast).